A 342-amino-acid polypeptide reads, in one-letter code: Apurinic-apyrimidinic endonuclease 1 (342 aa).

Zn(2+) is bound by residues H61, E136, D170, H173, H207, D220, H222, and E252. Residues 299–310 (HLNKFEKKEAKK) are compositionally biased toward basic and acidic residues. The tract at residues 299 to 342 (HLNKFEKKEAKKDRKKKSKDGDQTTLLLRKKQKLGNAEVKSLDE) is disordered.

It belongs to the AP endonuclease 2 family. Requires Zn(2+) as cofactor.

The protein resides in the nucleus. Functionally, DNA repair enzyme that cleaves apurinic/apyrimidinic (AP) sites and removes 3'-blocking groups present at single strand breaks of damaged DNA. Provides back-up AP endonuclease (APE) activity to apn2 together with uve1. The sequence is that of Apurinic-apyrimidinic endonuclease 1 (apn1) from Schizosaccharomyces pombe (strain 972 / ATCC 24843) (Fission yeast).